A 406-amino-acid polypeptide reads, in one-letter code: Imidazolonepropionase (406 aa).

Fe(3+) is bound by residues histidine 65 and histidine 67. Residues histidine 65 and histidine 67 each coordinate Zn(2+). Arginine 74, tyrosine 137, and histidine 170 together coordinate 4-imidazolone-5-propanoate. Tyrosine 137 provides a ligand contact to N-formimidoyl-L-glutamate. Histidine 235 is a binding site for Fe(3+). Histidine 235 serves as a coordination point for Zn(2+). Glutamine 238 is a binding site for 4-imidazolone-5-propanoate. Aspartate 310 contributes to the Fe(3+) binding site. Aspartate 310 is a Zn(2+) binding site. Residues asparagine 312 and glycine 314 each coordinate N-formimidoyl-L-glutamate. Threonine 315 is a 4-imidazolone-5-propanoate binding site.

It belongs to the metallo-dependent hydrolases superfamily. HutI family. Requires Zn(2+) as cofactor. Fe(3+) serves as cofactor.

The protein resides in the cytoplasm. It catalyses the reaction 4-imidazolone-5-propanoate + H2O = N-formimidoyl-L-glutamate. The protein operates within amino-acid degradation; L-histidine degradation into L-glutamate; N-formimidoyl-L-glutamate from L-histidine: step 3/3. Catalyzes the hydrolytic cleavage of the carbon-nitrogen bond in imidazolone-5-propanoate to yield N-formimidoyl-L-glutamate. It is the third step in the universal histidine degradation pathway. In Vibrio vulnificus (strain YJ016), this protein is Imidazolonepropionase.